The primary structure comprises 910 residues: Triacylglycerol lipase 4 (910 aa).

Residues 51–66 show a composition bias toward basic and acidic residues; that stretch reads SKDNSDVERVEEDAGK. The tract at residues 51 to 120 is disordered; that stretch reads SKDNSDVERV…TDEGEDERQG (70 aa). Ser55 carries the post-translational modification Phosphoserine. Residues 70 to 85 show a composition bias toward polar residues; that stretch reads TGKNKTTNKVNFNLDT. A compositionally biased stretch (acidic residues) spans 90-116; that stretch reads KLDDDQETVTENENNDIEMVETDEGED. The PNPLA domain maps to 282-483; that stretch reads LVLSGGGTFG…DNDLPISRLS (202 aa). The GXGXXG signature appears at 286 to 291; the sequence is GGGTFG. Positions 313–317 match the GXSXG motif; sequence GSSAG. Ser315 acts as the Nucleophile in catalysis. Residue Asp470 is the Proton acceptor of the active site. Disordered regions lie at residues 657-683 and 713-777; these read EQTSDESKNPENSTLLTRTPTKGDNHI and SPSG…PILQ. Polar residues predominate over residues 666–683; sequence PENSTLLTRTPTKGDNHI. Thr675 bears the Phosphothreonine; by Cdk1 mark. Phosphoserine occurs at positions 737, 749, 751, and 836. Residues 739–768 show a composition bias toward polar residues; sequence TISTSRRPAKSFSFSVASPTSRMLRQSSKI. The segment at 874–910 is disordered; that stretch reads RRHSIDGRPPSQATKSSPFRSRPSSSTQHKSTTSFTQ. Over residues 889 to 899 the composition is skewed to low complexity; sequence SSPFRSRPSSS. Ser890 is subject to Phosphoserine; by Cdk1. Residues 900–910 are compositionally biased toward polar residues; sequence TQHKSTTSFTQ.

Post-translationally, phosphorylation at Thr-675 and Ser-890 by Cdk1/CDC28 stimulates enzyme activity in vivo.

It is found in the lipid droplet. It carries out the reaction a triacylglycerol + H2O = a diacylglycerol + a fatty acid + H(+). It catalyses the reaction 1,2,3-tri-(9Z-octadecenoyl)-glycerol + H2O = di-(9Z)-octadecenoylglycerol + (9Z)-octadecenoate + H(+). The enzyme catalyses 1,2-dihexadecanoyl-sn-glycero-3-phosphocholine + H2O = 1-hexadecanoyl-sn-glycero-3-phosphocholine + hexadecanoate + H(+). The catalysed reaction is cholesteryl (9Z-octadecenoate) + H2O = cholesterol + (9Z)-octadecenoate + H(+). It carries out the reaction 1-(9Z-octadecenoyl)-sn-glycero-3-phosphate + (9Z)-octadecenoyl-CoA = 1,2-di-(9Z-octadecenoyl)-sn-glycero-3-phosphate + CoA. Its activity is regulated as follows. Phosphorylated and activated by cyclin-dependent kinase 1 (Cdk1/CDC28). Loses its lipolytic activity in cells lacking nonpolar lipids, but retains its side activity as lysophospholipid acyltransferase. In terms of biological role, lipid particle-localized triacylglycerol (TAG) lipase. The lipid droplet/particle is a lipid storage compartment which serves as a depot of energy and building blocks for membrane lipid biosynthesis. Involved in the mobilization of the non-polar storage lipids triacylglycerols (TAGs) from lipid particles by hydrolysis of TAGs, releasing and supplying specific fatty acids to the appropriate metabolic pathways. Also has steryl ester (SE) hydrolase and phospholipase A(2) (PLA(2)) activities, and catalyzes the acylation of lysophosphatidic acid (LPA). Contributes to early bud formation in late G1 phase of the cell cycle upon phosphorylation and activation by cyclin-dependent kinase 1 (Cdk1/CDC28). This is Triacylglycerol lipase 4 (TGL4) from Saccharomyces cerevisiae (strain ATCC 204508 / S288c) (Baker's yeast).